Here is a 413-residue protein sequence, read N- to C-terminus: Gamma-lactamase FDB1 (413 aa).

Residues His126, His128, Asp130, His131, His211, Asp235, and His323 each contribute to the Zn(2+) site.

This sequence belongs to the metallo-beta-lactamase superfamily.

Its pathway is xenobiotic degradation. Its function is as follows. Gamma-lactamase; part of the Fusarium detoxification of benzoxazolinone cluster involved in the degradation of benzoxazolinones produced by the host plant. Maize, wheat, and rye produce the 2 benzoxazinone phytoanticipins 2,4-dihy-droxy-7-methoxy-1,4-benzoxazin-3-one (DIMBOA) and 2,4-dihydroxy-1,4-benzoxazin-3-one (DIBOA) that, due to their inherent instability once released, spontaneously degrade to the more stable corresponding benzoxazolinones, 6-methoxy-2-benzoxazolinone (MBOA) and 2-benzoxazolinone (BOA), respectively. The first step in the detoxification of benzoxazolinones involves the hydrolysis of the cyclic ester bond of benzoxazolinones by the gamma-lactamase FDB1 to aminophenols. FDB1 is able to convert BOA into 2-aminophenol (2-AP), as well as MBOA into 5-methoxy-2-aminophenol (2-AMP). The N-malonyltransferase FDB2 then metabolizes aminophenols via N-malonylation to non-toxic malonamic acids. FDB2 converts 2-AP into N-(2-hydroxyphenyl) malonamic acid (HPMA) and 2-AMP into N-(2-hydroxy-4-methoxyphenyl) malonamic acid (HMPMA). The cluster also contains 2 transcription factors (FDB3 and FPSE_08121), an aldo-keto reductase (FPSE_08125) that possibly associates with a ketone component of BOA and MBOA degradation, an esterase (FPSE_08126), an acyl-CoA transferase (FPSE_08120), a solute carrier protein (FPSE_08119) and a transmembrane transporter (FPSE_08127) proposed to shuttle metabolites of benzoxazolinone degradation. The polypeptide is Gamma-lactamase FDB1 (Fusarium pseudograminearum (strain CS3096) (Wheat and barley crown-rot fungus)).